An 872-amino-acid chain; its full sequence is Leucine--tRNA ligase (872 aa).

The short motif at 42 to 52 (PYPSGSLHMGH) is the 'HIGH' region element. Positions 634–638 (TMSKS) match the 'KMSKS' region motif. Residue Lys637 coordinates ATP.

Belongs to the class-I aminoacyl-tRNA synthetase family.

The protein localises to the cytoplasm. The catalysed reaction is tRNA(Leu) + L-leucine + ATP = L-leucyl-tRNA(Leu) + AMP + diphosphate. The chain is Leucine--tRNA ligase from Nostoc sp. (strain PCC 7120 / SAG 25.82 / UTEX 2576).